Consider the following 182-residue polypeptide: Putative lipoprotein LpqE (182 aa).

Positions methionine 1–glycine 29 are cleaved as a signal peptide. Cysteine 30 carries the N-palmitoyl cysteine lipid modification. Cysteine 30 carries S-diacylglycerol cysteine lipidation.

The protein localises to the cell membrane. This chain is Putative lipoprotein LpqE (lpqE), found in Mycobacterium bovis (strain ATCC BAA-935 / AF2122/97).